Here is a 173-residue protein sequence, read N- to C-terminus: Ribulose bisphosphate carboxylase small subunit, chloroplastic 3 (173 aa).

Residues M1–Q49 constitute a chloroplast transit peptide.

Belongs to the RuBisCO small chain family. Heterohexadecamer of 8 large and 8 small subunits.

It is found in the plastid. It localises to the chloroplast. In terms of biological role, ruBisCO catalyzes two reactions: the carboxylation of D-ribulose 1,5-bisphosphate, the primary event in carbon dioxide fixation, as well as the oxidative fragmentation of the pentose substrate. Both reactions occur simultaneously and in competition at the same active site. Although the small subunit is not catalytic it is essential for maximal activity. This chain is Ribulose bisphosphate carboxylase small subunit, chloroplastic 3, found in Flaveria pringlei.